Reading from the N-terminus, the 159-residue chain is MMIMKEFTHTDEKGVRMVDVGSKPVVRRTATAEGHILLREDTINLIREKKIEKGNVLATAQIAAIVAVKRTWEIIPLCHPLPLTGVDVEFDLDDDRITARVTVRCDGKTGVEMEAVTGVSVALLTIWDMVKSVEKDDDGQYPETAISNIRVIKKEKLEL.

Residue Asp128 is part of the active site.

Belongs to the MoaC family.

Its pathway is cofactor biosynthesis; molybdopterin biosynthesis. In terms of biological role, together with MoaA, is involved in the conversion of 5'-GTP to cyclic pyranopterin monophosphate (cPMP or molybdopterin precursor Z). In Methanothermobacter thermautotrophicus (strain ATCC 29096 / DSM 1053 / JCM 10044 / NBRC 100330 / Delta H) (Methanobacterium thermoautotrophicum), this protein is Probable cyclic pyranopterin monophosphate synthase accessory protein.